The chain runs to 221 residues: DELTA-actitoxin-Ucs1a (221 aa).

The signal sequence occupies residues 1–19; that stretch reads MNRLIVLCLFVAMIYATIA. A propeptide spanning residues 20–42 is cleaved from the precursor; it reads LPKKEDISNDERSISVSKVPVKK. Residues 45-54 form a plays an important role in the hemolytic activity region; that stretch reads AIAGAVIEGA. An N-terminal region region spans residues 53 to 72; it reads GAKLTFGILEKILTVLGDIN. Positions 96, 129, 147, 149, 175, 179, and 180 each coordinate phosphocholine. The segment at 147 to 162 is trp-rich region, which is important for the binding to lipid membrane; the sequence is SVPYDYNLYSNWWNIK. Residues 186-188 carry the Cell attachment site, crucial for protein stability motif; it reads KGD.

The protein belongs to the actinoporin family. Sea anemone subfamily. As to quaternary structure, octamer or nonamer in membranes. Monomer in the soluble state.

The protein resides in the secreted. Its subcellular location is the nematocyst. It localises to the target cell membrane. In terms of biological role, pore-forming protein that forms cations-selective hydrophilic pores of around 1 nm and causes cytolysis. Pore formation is a multi-step process that involves specific recognition of membrane sphingomyelin (but neither cholesterol nor phosphatidylcholine) using aromatic rich region and adjacent phosphocholine (POC) binding site, firm binding to the membrane (mainly driven by hydrophobic interactions) accompanied by the transfer of the N-terminal region to the lipid-water interface and finally pore formation after oligomerization of monomers. This is DELTA-actitoxin-Ucs1a from Urticina crassicornis (Mottled anemone).